The following is a 581-amino-acid chain: Proline--tRNA ligase (581 aa).

The protein belongs to the class-II aminoacyl-tRNA synthetase family. ProS type 1 subfamily. Homodimer.

Its subcellular location is the cytoplasm. The enzyme catalyses tRNA(Pro) + L-proline + ATP = L-prolyl-tRNA(Pro) + AMP + diphosphate. Its function is as follows. Catalyzes the attachment of proline to tRNA(Pro) in a two-step reaction: proline is first activated by ATP to form Pro-AMP and then transferred to the acceptor end of tRNA(Pro). As ProRS can inadvertently accommodate and process non-cognate amino acids such as alanine and cysteine, to avoid such errors it has two additional distinct editing activities against alanine. One activity is designated as 'pretransfer' editing and involves the tRNA(Pro)-independent hydrolysis of activated Ala-AMP. The other activity is designated 'posttransfer' editing and involves deacylation of mischarged Ala-tRNA(Pro). The misacylated Cys-tRNA(Pro) is not edited by ProRS. This Azoarcus sp. (strain BH72) protein is Proline--tRNA ligase.